The sequence spans 30 residues: Trypsin inhibitor 7 (30 aa).

3 disulfides stabilise this stretch: Cys4–Cys21, Cys11–Cys23, and Cys17–Cys29.

Belongs to the protease inhibitor I7 (squash-type serine protease inhibitor) family.

It is found in the secreted. In terms of biological role, strongly inhibits trypsin, weakly inhibits chymotrypsin. This chain is Trypsin inhibitor 7, found in Cyclanthera pedata (Achocha).